The following is a 173-amino-acid chain: Mesencephalic astrocyte-derived neurotrophic factor homolog (173 aa).

The first 22 residues, 1-22, serve as a signal peptide directing secretion; it reads MKTAHLVVVVCFLAGALQTAVA. Cystine bridges form between Cys28/Cys114, Cys31/Cys103, Cys61/Cys72, and Cys148/Cys151.

This sequence belongs to the ARMET family.

The protein resides in the secreted. In terms of biological role, required during the maturation of the embryonic nervous system for maintenance of neuronal and cuticular connectivity. Essential for maintenance of dopaminergic neurons and dopamine levels. This Drosophila ananassae (Fruit fly) protein is Mesencephalic astrocyte-derived neurotrophic factor homolog.